The following is a 375-amino-acid chain: FAD-dependent catabolic D-arginine dehydrogenase DauA (375 aa).

FAD contacts are provided by residues Ala14, 32-33, 41-48, Ala171, and 331-336; these read ER, STGRSAAH, and GGYGIQ.

The protein belongs to the FAD-dependent glycerol-3-phosphate dehydrogenase family. In terms of assembly, monomer. FAD serves as cofactor.

It carries out the reaction D-arginine + A + H2O = 5-guanidino-2-oxopentanoate + AH2 + NH4(+). It catalyses the reaction a D-alpha-amino acid + A + H2O = a 2-oxocarboxylate + AH2 + NH4(+). With respect to regulation, inhibited by D-arginine and D-lysine at high concentration. Functionally, dauA is highly expressed within the cystic fibrosis (CF) lung, and it is required for virulence via the optimal production of hydrogen cyanide, pyocyanine, pyoverdine, rhamnolipid and alginate during biofilm formation. Involved in the catabolism of D-lysine and D-arginine. Under aerobic conditions, the arginine succinyltransferase (AST) and arginine transaminase (ATA) pathways are 2 major routes for L-arginine utilization as the sole source of carbon and nitrogen. The D-to-L racemization of arginine by DauA and DauB is necessary, before to be channeled into the AST and/or ATA pathways. DauA catalyzes the flavin-dependent oxidative deamination of D-arginine into 2-ketoarginine (2-KA) and ammonia. It also has dehydrogenase activity towards D-lysine, D-tyrosine, D-methionine, D-phenylalanine, D-ornithine, D-histidine and D-leucine as substrates. This Pseudomonas aeruginosa (strain ATCC 15692 / DSM 22644 / CIP 104116 / JCM 14847 / LMG 12228 / 1C / PRS 101 / PAO1) protein is FAD-dependent catabolic D-arginine dehydrogenase DauA.